The primary structure comprises 209 residues: Scoloptoxin SSD346 (209 aa).

Residues 1–22 (NILLSSTLFVLLMFQIIGSGLG) form the signal peptide.

In terms of processing, contains 2 disulfide bonds. In terms of tissue distribution, expressed by the venom gland.

The protein resides in the secreted. In terms of biological role, may act as a voltage-gated calcium channel inhibitor. The protein is Scoloptoxin SSD346 of Scolopendra dehaani (Thai centipede).